Reading from the N-terminus, the 100-residue chain is Urease subunit gamma (100 aa).

It belongs to the urease gamma subunit family. In terms of assembly, heterotrimer of UreA (gamma), UreB (beta) and UreC (alpha) subunits. Three heterotrimers associate to form the active enzyme.

The protein localises to the cytoplasm. It carries out the reaction urea + 2 H2O + H(+) = hydrogencarbonate + 2 NH4(+). It participates in nitrogen metabolism; urea degradation; CO(2) and NH(3) from urea (urease route): step 1/1. The protein is Urease subunit gamma of Cyanothece sp. (strain PCC 7425 / ATCC 29141).